The chain runs to 175 residues: Crossover junction endodeoxyribonuclease RuvC (175 aa).

Active-site residues include Asp-16, Glu-76, and Asp-148. 3 residues coordinate Mg(2+): Asp-16, Glu-76, and Asp-148.

This sequence belongs to the RuvC family. In terms of assembly, homodimer which binds Holliday junction (HJ) DNA. The HJ becomes 2-fold symmetrical on binding to RuvC with unstacked arms; it has a different conformation from HJ DNA in complex with RuvA. In the full resolvosome a probable DNA-RuvA(4)-RuvB(12)-RuvC(2) complex forms which resolves the HJ. It depends on Mg(2+) as a cofactor.

The protein localises to the cytoplasm. The catalysed reaction is Endonucleolytic cleavage at a junction such as a reciprocal single-stranded crossover between two homologous DNA duplexes (Holliday junction).. Its function is as follows. The RuvA-RuvB-RuvC complex processes Holliday junction (HJ) DNA during genetic recombination and DNA repair. Endonuclease that resolves HJ intermediates. Cleaves cruciform DNA by making single-stranded nicks across the HJ at symmetrical positions within the homologous arms, yielding a 5'-phosphate and a 3'-hydroxyl group; requires a central core of homology in the junction. The consensus cleavage sequence is 5'-(A/T)TT(C/G)-3'. Cleavage occurs on the 3'-side of the TT dinucleotide at the point of strand exchange. HJ branch migration catalyzed by RuvA-RuvB allows RuvC to scan DNA until it finds its consensus sequence, where it cleaves and resolves the cruciform DNA. This Rhodopseudomonas palustris (strain BisB18) protein is Crossover junction endodeoxyribonuclease RuvC.